The sequence spans 227 residues: MQATKTGNASTVFVVDDEASVRDSLTWLLNSISLDVRTFESAKDFLDADISCTHGCVVLDVRMQNVSGLQLQQALSERGFKLPIIFLSAYGDAQMGAQAVKKGAFDFLQKPYRNQDLLDAVNAALALNREMADKQNEKQKHLDLLATLSQREMEILDKVVAGSSSKEIAKLLGISYKTVEAHRGRIISKLGLKSTGDLMHFVMRGSSHCSDCGRQPLPGSSPCRPAA.

The Response regulatory domain occupies 11–125 (TVFVVDDEAS…DLLDAVNAAL (115 aa)). A 4-aspartylphosphate modification is found at Asp60. An HTH luxR-type domain is found at 141 to 206 (HLDLLATLSQ…DLMHFVMRGS (66 aa)). Residues 165–184 (SKEIAKLLGISYKTVEAHRG) constitute a DNA-binding region (H-T-H motif).

In terms of processing, phosphorylated by TdiS.

Functionally, member of the two-component regulatory system TdiR/TdiS, which probably regulates transcription of toluene catabolic genes (bss operon). Binds to DNA. In Thauera aromatica, this protein is Transcriptional regulatory protein TdiR (tdiR).